Reading from the N-terminus, the 2136-residue chain is Methylcytosine dioxygenase TET1 (2136 aa).

2 stretches are compositionally biased toward basic residues: residues 1 to 12 (MSRSRHARPSRL) and 20 to 31 (KKKKNSQLRKTT). Residues 1 to 47 (MSRSRHARPSRLVRKEDVNKKKKNSQLRKTTKGANKNVASVKTLSPG) are disordered. Positions 32-43 (KGANKNVASVKT) are enriched in polar residues. Positions 528 to 674 (LGIAQLSQAG…NGPKSESMDY (147 aa)) are sufficient for binding to genomic CpG islands. A CXXC-type zinc finger spans residues 584–625 (EKKKRKRCGVCEPCQQKTNCGECTYCKNRKNSHQICKKRKCE). C591, C594, C597, C603, C606, C609, C619, and C624 together coordinate Zn(2+). Basic and acidic residues-rich tracts occupy residues 712–724 (QNKK…HVKG), 732–743 (EAEKSKNSEVDK), and 849–869 (IHNE…EPKD). 4 disordered regions span residues 712–746 (QNKK…KKRT), 849–876 (IHNE…VQPS), 899–923 (QLSE…EQRT), and 1119–1169 (EKGT…VSYQ). S871 is modified (phosphoserine). Residues 901-911 (SEAPSENSSPS) are compositionally biased toward low complexity. Residues 1119-1139 (EKGTIQQKPPSSVHNNHGSSL) are compositionally biased toward polar residues. The segment covering 1146 to 1163 (TQKKTKSTPSRDRRKKKP) has biased composition (basic residues). Positions 1422, 1424, 1482, 1508, and 1510 each coordinate Zn(2+). R1551 provides a ligand contact to 2-oxoglutarate. Zn(2+) is bound by residues C1561, C1563, C1579, and C1588. The interval 1580 to 1593 (SWSMYFNGCKFGRS) is interaction with DNA. A Glycyl lysine isopeptide (Lys-Gly) (interchain with G-Cter in ubiquitin) cross-link involves residue K1589. C1648 is a binding site for Zn(2+). Position 1664 (C1664) interacts with 2-oxoglutarate. H1670 lines the Zn(2+) pocket. Positions 1672 and 1674 each coordinate Fe cation. N1677 provides a ligand contact to substrate. 2-oxoglutarate is bound at residue H1706. Disordered regions lie at residues 1774 to 1897 (EKKP…AAAD) and 1919 to 1984 (EPLI…SPAE). Low complexity predominate over residues 1786 to 1800 (NSTTTNNSKPSSLPT). Polar residues-rich tracts occupy residues 1824–1833 (SSDNTKTYSL) and 1937–1953 (HQPN…QDLA). Residues 1957 to 1976 (MEEDEQHSEADEPPSDEPLS) show a composition bias toward acidic residues. Residue H2028 coordinates Fe cation. 2043 to 2045 (RLS) is a binding site for 2-oxoglutarate. Substrate is bound at residue 2049-2051 (YQH). A Zn(2+)-binding site is contributed by H2059. The span at 2074 to 2087 (KNKKMKASEQKDQA) shows a compositional bias: basic and acidic residues. Residues 2074–2100 (KNKKMKASEQKDQAANEGPEQSSEVNE) form a disordered region.

The protein belongs to the TET family. In terms of assembly, interacts with SIN3A; recruits the transcriptional corepressor SIN3A to gene promoters. Interacts with HCFC1. Interacts (via C-terminus) with OGT. Found in a complex composed of at least SINHCAF, SIN3A, HDAC1, SAP30, RBBP4, OGT and TET1. Interacts with QSER1. Interacts with NONO (via DNA-binding domain); this interaction recruits TET1 to genomic loci. Interacts with FOXA2; this interaction may recruit TET1 to specific enhancers to preserve their unmethylated status and hence allowing gene expression. Interacts with RNF2. Directly interacts (via C-terminus) with the DCAF1 component of the CRL4(VprBP) E3 ubiquitin-protein ligase complex. As to quaternary structure, interacts with UHRF1; this interaction induces the recruitment of TET1 to replicating heterochromatin. Interacts with DCAF1. Requires Fe(2+) as cofactor. It depends on Zn(2+) as a cofactor. In terms of processing, glycosylated. Interaction with OGT leads to GlcNAcylation. Monoubiquitinated at Lys-1589 by the DCX (DDB1-CUL4-X-box) E3 ubiquitin-protein ligase complex called CRL4(VprBP) or CUL4A-RBX1-DDB1-DCAF1/VPRBP complex; this modification promotes binding to DNA. Expressed in fetal heart, lung and brain, and in adult skeletal muscle, thymus and ovary. Not detected in adult heart, lung or brain. Up-regulated in glioblastoma cells (at protein level). In terms of tissue distribution, expressed in embryonic stem cells (at protein level).

Its subcellular location is the nucleus. The protein resides in the chromosome. It carries out the reaction a 5-methyl-2'-deoxycytidine in DNA + 2-oxoglutarate + O2 = a 5-hydroxymethyl-2'-deoxycytidine in DNA + succinate + CO2. The enzyme catalyses a 5-hydroxymethyl-2'-deoxycytidine in DNA + 2-oxoglutarate + O2 = a 5-formyl-2'-deoxycytidine in DNA + succinate + CO2 + H2O. The catalysed reaction is a 5-formyl-2'-deoxycytidine in DNA + 2-oxoglutarate + O2 = a 5-carboxyl-2'-deoxycytidine in DNA + succinate + CO2 + H(+). Functionally, dioxygenase that plays a key role in active DNA demethylation, by catalyzing the sequential oxidation of the modified genomic base 5-methylcytosine (5mC) into 5-hydroxymethylcytosine (5hmC), 5-formylcytosine (5fC), and 5-carboxylcytosine (5caC). In addition to its role in DNA demethylation, plays a more general role in chromatin regulation by recruiting histone modifying protein complexes to alter histone marks and chromatin accessibility, leading to both activation and repression of gene expression. Plays therefore a role in many biological processes, including stem cell maintenance, T- and B-cell development, inflammation regulation, genomic imprinting, neural activity or DNA repair. Involved in the balance between pluripotency and lineage commitment of cells and plays a role in embryonic stem cells maintenance and inner cell mass cell specification. Together with QSER1, plays an essential role in the protection and maintenance of transcriptional and developmental programs to inhibit the binding of DNMT3A/3B and therefore de novo methylation. May play a role in pancreatic beta-cell specification during development. In this context, may function as an upstream epigenetic regulator of PAX4 presumably through direct recruitment by FOXA2 to a PAX4 enhancer to preserve its unmethylated status, thereby potentiating PAX4 expression to adopt beta-cell fate during endocrine lineage commitment. Under DNA hypomethylation conditions, such as in female meiotic germ cells, may induce epigenetic reprogramming of pericentromeric heterochromatin (PCH), the constitutive heterochromatin of pericentromeric regions. PCH forms chromocenters in the interphase nucleus and chromocenters cluster at the prophase of meiosis. In this context, may also be essential for chromocenter clustering in a catalytic activity-independent manner, possibly through the recruitment polycomb repressive complex 1 (PRC1) to the chromocenters. During embryonic development, may be required for normal meiotic progression in oocytes and meiotic gene activation. Binds preferentially to DNA containing cytidine-phosphate-guanosine (CpG) dinucleotides over CpH (H=A, T, and C), hemimethylated-CpG and hemimethylated-hydroxymethyl-CpG. Dioxygenase that plays a key role in active DNA demethylation. Binds to promoters, particularly to those with high CG content. In hippocampal neurons, isoform 1 regulates the expression of a unique subset of genes compared to isoform 2, although some overlap exists between both isoforms, hence differentially regulates excitatory synaptic transmission. In hippocampal neuron cell cultures, isoform 1 controls both miniature excitatory postsynaptic current amplitude and frequency. Isoform 1 may regulate genes involved in hippocampal-dependent memory, leading to positive regulation of memory, contrary to isoform 2 that may decrease memory. In terms of biological role, dioxygenase that plays a key role in active DNA demethylation. As isoform 1, binds to promoters, particularly to those with high CG content, however displays reduced global chromatin affinity compared with isoform 1, leading to decreased global DNA demethylation compared with isoform 1. Contrary to isoform 1, isoform 2 localizes during S phase to sites of ongoing DNA replication in heterochromatin, causing a significant de novo 5hmC formation, globally, and more so in heterochromatin, including LINE 1 interspersed DNA repeats leading to their activation. In hippocampal neurons, isoform 2 regulates the expression of a unique subset of genes compared to isoform 1, although some overlap between both isoforms, hence differentially regulates excitatory synaptic transmission. In hippocampal neuron cell cultures, isoform 2 controls miniature excitatory postsynaptic current frequency, but not amplitude. Isoform 2 may regulate genes involved in hippocampal-dependent memory, leading to negative regulation of memory, contrary to isoform 1 that may improve memory. In immature and partially differentiated gonadotrope cells, directly represses luteinizing hormone gene LHB expression and does not catalyze 5hmC at the gene promoter. This Homo sapiens (Human) protein is Methylcytosine dioxygenase TET1.